The following is a 377-amino-acid chain: Nitric oxide reductase FlRd-NAD(+) reductase (377 aa).

It belongs to the FAD-dependent oxidoreductase family. It depends on FAD as a cofactor.

It is found in the cytoplasm. The enzyme catalyses 2 reduced [nitric oxide reductase rubredoxin domain] + NAD(+) + H(+) = 2 oxidized [nitric oxide reductase rubredoxin domain] + NADH. It participates in nitrogen metabolism; nitric oxide reduction. Functionally, one of at least two accessory proteins for anaerobic nitric oxide (NO) reductase. Reduces the rubredoxin moiety of NO reductase. In Salmonella gallinarum (strain 287/91 / NCTC 13346), this protein is Nitric oxide reductase FlRd-NAD(+) reductase.